Consider the following 466-residue polypeptide: Ribulose bisphosphate carboxylase large chain (466 aa).

Lys-4 carries the N6,N6,N6-trimethyllysine modification. Residues Asn-113 and Thr-163 each coordinate substrate. The Proton acceptor role is filled by Lys-165. Residue Lys-167 coordinates substrate. Mg(2+) is bound by residues Lys-191, Asp-193, and Glu-194. Position 191 is an N6-carboxylysine (Lys-191). His-284 functions as the Proton acceptor in the catalytic mechanism. Substrate contacts are provided by Arg-285, His-317, and Ser-369.

This sequence belongs to the RuBisCO large chain family. Type I subfamily. Heterohexadecamer of 8 large chains and 8 small chains; disulfide-linked. The disulfide link is formed within the large subunit homodimers. The cofactor is Mg(2+). The disulfide bond which can form in the large chain dimeric partners within the hexadecamer appears to be associated with oxidative stress and protein turnover.

It localises to the plastid. Its subcellular location is the chloroplast. It catalyses the reaction 2 (2R)-3-phosphoglycerate + 2 H(+) = D-ribulose 1,5-bisphosphate + CO2 + H2O. The catalysed reaction is D-ribulose 1,5-bisphosphate + O2 = 2-phosphoglycolate + (2R)-3-phosphoglycerate + 2 H(+). Functionally, ruBisCO catalyzes two reactions: the carboxylation of D-ribulose 1,5-bisphosphate, the primary event in carbon dioxide fixation, as well as the oxidative fragmentation of the pentose substrate in the photorespiration process. Both reactions occur simultaneously and in competition at the same active site. This chain is Ribulose bisphosphate carboxylase large chain, found in Ruttya fruticosa (African azalea).